Consider the following 285-residue polypeptide: 4-diphosphocytidyl-2-C-methyl-D-erythritol kinase (285 aa).

The active site involves Lys-10. 94-104 (PVAAGLGGGSS) lines the ATP pocket. Asp-136 is a catalytic residue.

It belongs to the GHMP kinase family. IspE subfamily.

It carries out the reaction 4-CDP-2-C-methyl-D-erythritol + ATP = 4-CDP-2-C-methyl-D-erythritol 2-phosphate + ADP + H(+). Its pathway is isoprenoid biosynthesis; isopentenyl diphosphate biosynthesis via DXP pathway; isopentenyl diphosphate from 1-deoxy-D-xylulose 5-phosphate: step 3/6. In terms of biological role, catalyzes the phosphorylation of the position 2 hydroxy group of 4-diphosphocytidyl-2C-methyl-D-erythritol. This Latilactobacillus sakei subsp. sakei (strain 23K) (Lactobacillus sakei subsp. sakei) protein is 4-diphosphocytidyl-2-C-methyl-D-erythritol kinase.